A 376-amino-acid chain; its full sequence is Flagellin B (376 aa).

A coiled-coil region spans residues Ser103 to Thr129.

This sequence belongs to the bacterial flagellin family. Heteromer of multiple flagellin subunits including FlaA, FlaB, FlaC, FlaD and FlaE.

Its subcellular location is the secreted. The protein localises to the bacterial flagellum. In terms of biological role, flagellin is the subunit protein which polymerizes to form the filaments of bacterial flagella. FlaB is not essential for flagellar synthesis and motility. The protein is Flagellin B (flaB) of Vibrio cholerae serotype O1 (strain ATCC 39541 / Classical Ogawa 395 / O395).